Reading from the N-terminus, the 122-residue chain is Large ribosomal subunit protein uL14 (122 aa).

Belongs to the universal ribosomal protein uL14 family. As to quaternary structure, part of the 50S ribosomal subunit. Forms a cluster with proteins L3 and L19. In the 70S ribosome, L14 and L19 interact and together make contacts with the 16S rRNA in bridges B5 and B8.

Its function is as follows. Binds to 23S rRNA. Forms part of two intersubunit bridges in the 70S ribosome. The chain is Large ribosomal subunit protein uL14 from Chlorobium chlorochromatii (strain CaD3).